Consider the following 306-residue polypeptide: Recombination-associated protein RdgC (306 aa).

It belongs to the RdgC family.

The protein localises to the cytoplasm. It is found in the nucleoid. Its function is as follows. May be involved in recombination. This is Recombination-associated protein RdgC from Pseudomonas syringae pv. syringae (strain B728a).